The chain runs to 377 residues: Succinyl-diaminopimelate desuccinylase (377 aa).

Residue His-68 participates in Zn(2+) binding. The active site involves Asp-70. Residue Asp-101 coordinates Zn(2+). The active-site Proton acceptor is Glu-135. Zn(2+) contacts are provided by Glu-136, Glu-164, and His-350.

Belongs to the peptidase M20A family. DapE subfamily. As to quaternary structure, homodimer. The cofactor is Zn(2+). Requires Co(2+) as cofactor.

The enzyme catalyses N-succinyl-(2S,6S)-2,6-diaminopimelate + H2O = (2S,6S)-2,6-diaminopimelate + succinate. Its pathway is amino-acid biosynthesis; L-lysine biosynthesis via DAP pathway; LL-2,6-diaminopimelate from (S)-tetrahydrodipicolinate (succinylase route): step 3/3. In terms of biological role, catalyzes the hydrolysis of N-succinyl-L,L-diaminopimelic acid (SDAP), forming succinate and LL-2,6-diaminopimelate (DAP), an intermediate involved in the bacterial biosynthesis of lysine and meso-diaminopimelic acid, an essential component of bacterial cell walls. This Aliivibrio fischeri (strain MJ11) (Vibrio fischeri) protein is Succinyl-diaminopimelate desuccinylase.